A 119-amino-acid polypeptide reads, in one-letter code: Small ribosomal subunit protein uS13 (119 aa).

A disordered region spans residues 90-119 (IRHRRGLPLRGQRTRSNARTRKGKRKPIRS). The segment covering 91 to 119 (RHRRGLPLRGQRTRSNARTRKGKRKPIRS) has biased composition (basic residues).

The protein belongs to the universal ribosomal protein uS13 family. In terms of assembly, part of the 30S ribosomal subunit. Forms a loose heterodimer with protein S19. Forms two bridges to the 50S subunit in the 70S ribosome.

Located at the top of the head of the 30S subunit, it contacts several helices of the 16S rRNA. In the 70S ribosome it contacts the 23S rRNA (bridge B1a) and protein L5 of the 50S subunit (bridge B1b), connecting the 2 subunits; these bridges are implicated in subunit movement. Contacts the tRNAs in the A and P-sites. The protein is Small ribosomal subunit protein uS13 of Coxiella burnetii (strain CbuK_Q154) (Coxiella burnetii (strain Q154)).